Consider the following 672-residue polypeptide: Outer dynein arm-docking complex subunit 4 (672 aa).

TPR repeat units lie at residues 13 to 46 (FPSY…QDGD), 48 to 80 (NCLV…DPAF), 81 to 114 (CKGI…RPDR), 275 to 311 (LKSL…NKEE), 320 to 353 (GNLY…AKEY), 360 to 393 (SRAL…AKTT), 397 to 430 (TWLF…AEEE), and 437 to 470 (LNAS…AKLV). The segment covering 527-544 (RVRDEPEKVVKQWDHSED) has biased composition (basic and acidic residues). Residues 527–672 (RVRDEPEKVV…TGNEMEKEYE (146 aa)) are disordered. Residues 545–555 (EKETDEDDEAF) are compositionally biased toward acidic residues. 2 stretches are compositionally biased toward basic and acidic residues: residues 595–650 (ETGR…EELG) and 658–672 (GETK…KEYE).

In terms of assembly, component of the outer dynein arm-docking complex along with ODAD1, ODAD2 and ODAD3. Interacts with ODAD1; this interaction may facilitate the recruitment and/or attachment of outer dynein arm docking complex proteins, including ODAD1, ODAD3 and ODAD2, to ciliary axonemes. Interacts with components of the IFT complex A, including IFT140, TTC21B/IFT139 and WDR19/IFT144, and the IFT complex B, including IFT46, IFT52 and IFT57. Interacts with CFAP53. Expressed in the nasal mucosa (at protein level).

It localises to the cytoplasm. The protein localises to the cytoskeleton. The protein resides in the cilium axoneme. Functionally, component of the outer dynein arm-docking complex (ODA-DC) that mediates outer dynein arms (ODA) binding onto the doublet microtubule. Plays an essential role for the assembly of ODA-DC and for the docking of ODA in ciliary axoneme. The sequence is that of Outer dynein arm-docking complex subunit 4 from Homo sapiens (Human).